Here is a 101-residue protein sequence, read N- to C-terminus: CYC02 protein (101 aa).

A 1; approximate repeat occupies 42–64 (DAVCHHGCCRWFHHRCVRCCRSA). A 2 X approximate repeats region spans residues 42-101 (DAVCHHGCCRWFHHRCVRCCRSAEEVSVSDTENNAAADAHCRHGCCRWFHGRCIRCCPSA). Residues 79–101 (DAHCRHGCCRWFHGRCIRCCPSA) form a 2; approximate repeat.

The protein belongs to the GRP family.

May be involved in the control of the cell cycle at the G1/S start transition. This Catharanthus roseus (Madagascar periwinkle) protein is CYC02 protein (CYC02).